The following is a 100-amino-acid chain: Small ribosomal subunit protein uS14c (100 aa).

Belongs to the universal ribosomal protein uS14 family. Part of the 30S ribosomal subunit.

The protein resides in the plastid. The protein localises to the chloroplast. Functionally, binds 16S rRNA, required for the assembly of 30S particles. The sequence is that of Small ribosomal subunit protein uS14c from Olimarabidopsis pumila (Dwarf rocket).